The chain runs to 175 residues: Crossover junction endodeoxyribonuclease RuvC (175 aa).

Active-site residues include Asp-16, Glu-76, and Asp-148. Mg(2+) is bound by residues Asp-16, Glu-76, and Asp-148.

Belongs to the RuvC family. As to quaternary structure, homodimer which binds Holliday junction (HJ) DNA. The HJ becomes 2-fold symmetrical on binding to RuvC with unstacked arms; it has a different conformation from HJ DNA in complex with RuvA. In the full resolvosome a probable DNA-RuvA(4)-RuvB(12)-RuvC(2) complex forms which resolves the HJ. Requires Mg(2+) as cofactor.

It localises to the cytoplasm. The catalysed reaction is Endonucleolytic cleavage at a junction such as a reciprocal single-stranded crossover between two homologous DNA duplexes (Holliday junction).. In terms of biological role, the RuvA-RuvB-RuvC complex processes Holliday junction (HJ) DNA during genetic recombination and DNA repair. Endonuclease that resolves HJ intermediates. Cleaves cruciform DNA by making single-stranded nicks across the HJ at symmetrical positions within the homologous arms, yielding a 5'-phosphate and a 3'-hydroxyl group; requires a central core of homology in the junction. The consensus cleavage sequence is 5'-(A/T)TT(C/G)-3'. Cleavage occurs on the 3'-side of the TT dinucleotide at the point of strand exchange. HJ branch migration catalyzed by RuvA-RuvB allows RuvC to scan DNA until it finds its consensus sequence, where it cleaves and resolves the cruciform DNA. The sequence is that of Crossover junction endodeoxyribonuclease RuvC from Bradyrhizobium diazoefficiens (strain JCM 10833 / BCRC 13528 / IAM 13628 / NBRC 14792 / USDA 110).